Consider the following 639-residue polypeptide: Ubiquitin-like modifier-activating enzyme ATG7 (639 aa).

A GXGXXG motif motif is present at residues 322 to 327 (GAGTLG). The Glycyl thioester intermediate role is filled by C502.

Belongs to the ATG7 family. In terms of assembly, homodimer.

The protein localises to the cytoplasm. Its subcellular location is the preautophagosomal structure. Functionally, E1-like activating enzyme involved in the 2 ubiquitin-like systems required for cytoplasm to vacuole transport (Cvt) and autophagy. Activates ATG12 for its conjugation with ATG5 and ATG8 for its conjugation with phosphatidylethanolamine. Both systems are needed for the ATG8 association to Cvt vesicles and autophagosomes membranes. Autophagy is essential for maintenance of amino acid levels and protein synthesis under nitrogen starvation. Required for selective autophagic degradation of the nucleus (nucleophagy) as well as for mitophagy which contributes to regulate mitochondrial quantity and quality by eliminating the mitochondria to a basal level to fulfill cellular energy requirements and preventing excess ROS production. Plays a role in the regulation of filamentous growth and chronological longevity. The sequence is that of Ubiquitin-like modifier-activating enzyme ATG7 (APG7) from Candida albicans (strain SC5314 / ATCC MYA-2876) (Yeast).